A 294-amino-acid polypeptide reads, in one-letter code: tRNA dimethylallyltransferase (294 aa).

Position 11–18 (11–18 (GPTAVGKT)) interacts with ATP. Residue 13–18 (TAVGKT) participates in substrate binding. Positions 36 to 39 (DSQQ) are interaction with substrate tRNA.

Belongs to the IPP transferase family. Monomer. Mg(2+) serves as cofactor.

It carries out the reaction adenosine(37) in tRNA + dimethylallyl diphosphate = N(6)-dimethylallyladenosine(37) in tRNA + diphosphate. Catalyzes the transfer of a dimethylallyl group onto the adenine at position 37 in tRNAs that read codons beginning with uridine, leading to the formation of N6-(dimethylallyl)adenosine (i(6)A). The protein is tRNA dimethylallyltransferase of Lactococcus lactis subsp. cremoris (strain SK11).